The sequence spans 86 residues: Weak toxin 3 (86 aa).

Positions 1–23 (MKTLLLTLVVVTIVCLDLGYTLT) are cleaved as a signal peptide. Intrachain disulfides connect Cys24/Cys45, Cys27/Cys32, Cys38/Cys63, Cys67/Cys78, and Cys79/Cys84.

The protein belongs to the three-finger toxin family. Ancestral subfamily. Orphan group II sub-subfamily. As to expression, expressed by the venom gland.

The protein localises to the secreted. Functionally, binds with low affinity to muscular (alpha-1-beta-1-delta-epsilon/CHRNA1-CHRNB1-CHRND-CHRNE) and very low affinity to neuronal (alpha-7/CHRNA7) nicotinic acetylcholine receptor (nAChR). This is Weak toxin 3 from Bungarus candidus (Malayan krait).